Consider the following 358-residue polypeptide: MTAPALKNDRYLRALAKQPVDRTPVWMMRQAGRYLPEYKEVRGQAGDFMSLCRNTELACEVTMQPLRRFDLDAAILFSDILTIPDAMGLGLYFEAGEGPKFKDPVRSMAAIKNLAVPDMEDELGYVMDAVRAIRRELNGSVPLIGFSGSPWTLATYMVEGGSTKNFSKVKQLMFADPEAMHTLLNVLAESVTQYLNAQIAAGAQSVMIFDTWGGVLSPRDYKAFSLAYMEKIVAGLTREADGRKVPVTLFTKNGGQWLEAMAASGADALGVDWTTDLSDARARVGGQVALQGNMDPSVLYAKPARIEEEVQSILQSYGSGTGHVFNLGHGIHPEVDPEHAAAFIEAIHKYSPAFHSND.

Residues 29 to 33 (RQAGR), Asp-79, Tyr-156, Thr-211, and His-329 contribute to the substrate site.

It belongs to the uroporphyrinogen decarboxylase family. Homodimer.

The protein localises to the cytoplasm. It carries out the reaction uroporphyrinogen III + 4 H(+) = coproporphyrinogen III + 4 CO2. It participates in porphyrin-containing compound metabolism; protoporphyrin-IX biosynthesis; coproporphyrinogen-III from 5-aminolevulinate: step 4/4. Catalyzes the decarboxylation of four acetate groups of uroporphyrinogen-III to yield coproporphyrinogen-III. This is Uroporphyrinogen decarboxylase from Idiomarina loihiensis (strain ATCC BAA-735 / DSM 15497 / L2-TR).